The following is a 1032-amino-acid chain: MADTPSVAVQAPPGYGKTELFHLPLIALASKGDVKYVSFLFVPYTVLLANCMIRLGRCGCLNVAPVRNFIEEGCDGVTDLYVGIYDDLASTNFTDRIAAWENIVECTFRTNNVKLGYLIVDEFHNFETEVYRQSQFGGITNLDFDAFEKAIFLSGTAPEAVADAALQRIGLTGLAKKSMDINELKRSEDLSRGLSSYPTRMFNLIKEKSEVPLGHVHKIWKKVESQPEEALKLLLALFEIEPESKAIVVASTTNEVEELACSWRKYFRVVWIHGKLGAAEKVSRTKEFVTDGSMRVLIGTKLVTEGIDIKQLMMVIMLDNRLNIIELIQGVGRLRDGGLCYLLSRKNSWAARNRKGELPPIKEGCITEQVREFYGLESKKGKKGQHVGCCGSRTDLSADTVELIERMDRLAEKQATASMSIVALPSSFQESNSSDRCRKYCSSDEDSNTCIHGSANASTNATTNSSTNATTTASTNVRTSATTTASINVRTSATTTESTNSSTNATTTASTNVRTSATTTASINVRTSATTTESTNSNTSATTTESTDSNTSATTTESTNSSTNATTTASINVRTSATTTESTNSNTNATTTESTNSSTNATTTEGTNSNTSATTTASTNSSTNATTTESTNASAKEDANKDGNAEDNRFHPVTDINKESYKRKGSQMVLLERKKLKAQFPNTSENMNVLQFLGFRSDEIKHLFLYGIDVYFCPEGVFTQYGLCKGCQKMFELCVCWAGQKVSYRRMAWEALAVERMLRNDEEYKEYLEDIEPYHGDPVGYLKYFSVKRGEIYSQIQRNYAWYLAITRRRETISVLDSTRGKQGSQVFRMSGRQIKELYYKVWSNLRESKTEVLQYFLNWDEKKCREEWEAKDDTVFVEALEKVGVFQRLRSMTSAGLQGPQYVKLQFSRHHRQLRSRYELSLGMHLRDQLALGVTPSKVPHWTAFLSMLIGLFCNKTFRQKLEYLLEQISEVWLLPHWLDLANVEVLAADNTRVPLYMLMVAVHKELDSDDVPDGRFDILLCRDSSREVGE.

Residues methionine 1–alanine 175 enclose the Helicase ATP-binding domain. Alanine 11 to threonine 18 contributes to the ATP binding site. A DEAH box motif is present at residues aspartate 121–histidine 124. In terms of domain architecture, Helicase C-terminal spans lysine 232 to glycine 381. Residues alanine 455 to serine 634 show a composition bias toward low complexity. The tract at residues alanine 455 to lysine 658 is disordered. Over residues alanine 635–lysine 658 the composition is skewed to basic and acidic residues.

It belongs to the helicase family. Yeast subtelomeric Y' repeat subfamily.

Its function is as follows. Catalyzes DNA unwinding and is involved in telomerase-independent telomere maintenance. The protein is Y' element ATP-dependent helicase YPR204W of Saccharomyces cerevisiae (strain ATCC 204508 / S288c) (Baker's yeast).